A 240-amino-acid polypeptide reads, in one-letter code: MEKISIQLSKLRKNFGTVEVLKDVDIAIPEGQFVALVGESGCGKSTLLRLISHLERPTSGQLLIDGKERRKINPSVRYLFQEARLLPWRSVLDNVRLGAKDRDKKTARESLESVNLLDKENEWPEILSGGQCQRVSLARALAGKPKILLLDEPLGALDALTRVQMQKLIESLWLEQKFTVLLVTHDVSEAVYLADRVIALEKGQIGLDREIPLPRPRVKDRHFACFENEILNFIMKNYYI.

Residues Ile-6–Glu-227 form the ABC transporter domain. Gly-38 to Ser-45 serves as a coordination point for ATP.

This sequence belongs to the ABC transporter superfamily. Aliphatic sulfonates importer (TC 3.A.1.17.2) family. In terms of assembly, the complex is composed of two ATP-binding proteins (SsuB), two transmembrane proteins (SsuC) and a solute-binding protein (SsuA).

Its subcellular location is the cell inner membrane. The catalysed reaction is ATP + H2O + aliphatic sulfonate-[sulfonate-binding protein]Side 1 = ADP + phosphate + aliphatic sulfonateSide 2 + [sulfonate-binding protein]Side 1.. Functionally, part of the ABC transporter complex SsuABC involved in aliphatic sulfonates import. Responsible for energy coupling to the transport system. The chain is Aliphatic sulfonates import ATP-binding protein SsuB from Zymomonas mobilis subsp. mobilis (strain ATCC 31821 / ZM4 / CP4).